The chain runs to 1098 residues: Trehalose synthase complex regulatory subunit TSL1 (1098 aa).

Ser-49, Ser-53, Ser-56, Ser-71, Ser-77, Ser-135, Ser-147, and Ser-161 each carry phosphoserine. Disordered regions lie at residues 59–86 (APAP…RASS), 129–168 (SVER…QQQQ), and 192–244 (SQTS…PSIK). Residues 72-86 (RSATRSPSAFNRASS) are compositionally biased toward polar residues. 2 tandem repeats follow at residues 144 to 150 (RIASPIQ) and 158 to 164 (RIASPIQ). The 2 X 7 AA repeats of R-I-A-S-P-I-Q stretch occupies residues 144 to 164 (RIASPIQHEHDSGSRIASPIQ). The segment covering 213–227 (RPTSAATSLVNRTKQ) has biased composition (polar residues). A compositionally biased stretch (low complexity) spans 228 to 242 (GSASSGSSGSSAPPS). At Ser-229 the chain carries Phosphoserine. Thr-251 carries the phosphothreonine modification. The tract at residues 274-297 (ADISSSETSSQHNESDPDDLTTAP) is disordered. Ser-303 carries the post-translational modification Phosphoserine. The interval 320-812 (GGYSNKSKLK…FNQEGSKIFK (493 aa)) is TPS complex domain. Thr-815 bears the Phosphothreonine mark. The tract at residues 1000-1027 (SSGQITNIQTPSQQNPSDQEQQPPASPT) is disordered.

This sequence in the C-terminal section; belongs to the glycosyltransferase 20 family. As to quaternary structure, the trehalose synthase complex is composed of the two catalytic subunits TPS1 and TPS2, and at least one of the two regulatory subunits TPS3 or TSL1.

The protein resides in the cytoplasm. Regulatory subunit of the trehalose synthase complex that catalyzes the production of trehalose from glucose-6-phosphate and UDP-glucose in a two step process. May stabilize the trehalose synthase complex, and confer sensitivity to physiological concentrations of phosphate and to fructose 6-phosphate. The sequence is that of Trehalose synthase complex regulatory subunit TSL1 (TSL1) from Saccharomyces cerevisiae (strain ATCC 204508 / S288c) (Baker's yeast).